Consider the following 156-residue polypeptide: Small ribosomal subunit protein uS7 (156 aa).

Belongs to the universal ribosomal protein uS7 family. As to quaternary structure, part of the 30S ribosomal subunit. Contacts proteins S9 and S11.

Its function is as follows. One of the primary rRNA binding proteins, it binds directly to 16S rRNA where it nucleates assembly of the head domain of the 30S subunit. Is located at the subunit interface close to the decoding center, probably blocks exit of the E-site tRNA. This chain is Small ribosomal subunit protein uS7, found in Streptococcus equi subsp. equi (strain 4047).